We begin with the raw amino-acid sequence, 184 residues long: Protein GrpE (184 aa).

Over residues 1–10 (MTDTPPENEE) the composition is skewed to acidic residues. The segment at 1 to 22 (MTDTPPENEEQHESNVQNENEV) is disordered.

The protein belongs to the GrpE family. Homodimer.

It is found in the cytoplasm. In terms of biological role, participates actively in the response to hyperosmotic and heat shock by preventing the aggregation of stress-denatured proteins, in association with DnaK and GrpE. It is the nucleotide exchange factor for DnaK and may function as a thermosensor. Unfolded proteins bind initially to DnaJ; upon interaction with the DnaJ-bound protein, DnaK hydrolyzes its bound ATP, resulting in the formation of a stable complex. GrpE releases ADP from DnaK; ATP binding to DnaK triggers the release of the substrate protein, thus completing the reaction cycle. Several rounds of ATP-dependent interactions between DnaJ, DnaK and GrpE are required for fully efficient folding. The protein is Protein GrpE of Chlamydia pneumoniae (Chlamydophila pneumoniae).